Here is a 389-residue protein sequence, read N- to C-terminus: Jasmonate O-methyltransferase (389 aa).

Tyr-18 is a binding site for S-adenosyl-L-homocysteine. A jasmonate-binding site is contributed by Gln-25. S-adenosyl-L-homocysteine is bound by residues Cys-60, Asn-65, Asp-97, Leu-98, Ser-142, and Phe-143. Jasmonate contacts are provided by His-163 and Trp-164. Mg(2+)-binding residues include Asn-186, Asp-272, Phe-274, and Asn-275.

Belongs to the methyltransferase superfamily. Type-7 methyltransferase family. Mg(2+) serves as cofactor. As to expression, expressed in rosettes, cauline leaves and developing flowers but not in young seedlings.

Its subcellular location is the cytoplasm. The protein resides in the nucleus. It catalyses the reaction jasmonate + S-adenosyl-L-methionine = methyl (-)-jasmonate + S-adenosyl-L-homocysteine. The protein operates within lipid metabolism; oxylipin biosynthesis. In terms of biological role, catalyzes the methylation of jasmonate into methyljasmonate, a plant volatile that acts as an important cellular regulator mediating diverse developmental processes and defense responses. This chain is Jasmonate O-methyltransferase, found in Arabidopsis thaliana (Mouse-ear cress).